Reading from the N-terminus, the 2452-residue chain is Lovastatin diketide synthase lovF (2452 aa).

Residues 10–381 (PAPIAVVGMG…GANAHAIVER (372 aa)) form the Ketosynthase family 3 (KS3) domain. Residues Cys173, His308, and His343 each act as for beta-ketoacyl synthase activity in the active site. Residues 496 to 790 (VFTGQGAQWF…PYLSCLSRGK (295 aa)) are malonyl-CoA:ACP transacylase (MAT) domain. Ser555 functions as the For malonyltransferase activity in the catalytic mechanism. The segment at 861–998 (HDLIGLQEPL…GLVRVDMDQP (138 aa)) is N-terminal hotdog fold. The segment at 861–1166 (HDLIGLQEPL…LEGLVFQSLG (306 aa)) is dehydratase (DH) domain. Positions 861 to 1171 (HDLIGLQEPL…FQSLGASLGT (311 aa)) constitute a PKS/mFAS DH domain. His893 functions as the Proton acceptor; for dehydratase activity in the catalytic mechanism. The disordered stretch occupies residues 997 to 1017 (QPASSLSNPQRADPRPWSRKT). Residues 1012-1171 (PWSRKTAPQD…FQSLGASLGT (160 aa)) are C-terminal hotdog fold. The Proton donor; for dehydratase activity role is filled by Asp1079. The tract at residues 1343-1528 (ELVRLCCHKN…RDCDSDEFYM (186 aa)) is methyltransferase (CMet) domain. The tract at residues 1745 to 2064 (GLLDSLYFRK…SGQHVGKIVV (320 aa)) is enoylreductase (ER) domain. The tract at residues 2088–2260 (SYLVAGGLGG…AVTIDLGMVQ (173 aa)) is ketoreductase (KR) domain. The region spanning 2373-2450 (ASIAVIMEAM…KVAEVVLQRY (78 aa)) is the Carrier domain. Ser2410 is subject to O-(pantetheine 4'-phosphoryl)serine.

Interacts with LovD. Pantetheine 4'-phosphate serves as cofactor.

The catalysed reaction is holo-[2-methylbutanoate polyketide synthase] + 2 malonyl-CoA + S-adenosyl-L-methionine + 2 NADPH + 3 H(+) = (S)-2-methylbutanoyl-[2-methylbutanoate polyketide synthase] + S-adenosyl-L-homocysteine + 2 CO2 + 2 NADP(+) + 2 CoA + H2O. It participates in polyketide biosynthesis; lovastatin biosynthesis. In terms of biological role, lovastatin diketide synthase; part of the gene cluster that mediates the biosynthesis of lovastatin (also known as mevinolin, mevacor or monacolin K), a hypolipidemic inhibitor of (3S)-hydroxymethylglutaryl-coenzyme A (HMG-CoA) reductase (HMGR). The first step in the biosynthesis of lovastatin is the production of dihydromonacolin L acid by the lovastatin nonaketide synthase lovB and the trans-acting enoyl reductase lovC via condensation of one acetyl-CoA unit and 8 malonyl-CoA units. Dihydromonacolin L acid is released from lovB by the thioesterase lovG. Next, dihydromonacolin L acid is oxidized by the dihydromonacolin L monooxygenase lovA twice to form monacolin J acid. The 2-methylbutyrate moiety of lovastatin is synthesized by the lovastatin diketide synthase lovF via condensation of one acetyl-CoA unit and one malonyl-CoA unit. Finally, the covalent attachment of this moiety to monacolin J acid is catalyzed by the transesterase lovD to yield lovastatin. LovD has broad substrate specificity and can also convert monacolin J to simvastatin using alpha-dimethylbutanoyl-S-methyl-3-mercaptopropionate (DMB-S-MMP) as the thioester acyl donor, and can also catalyze the reverse reaction and function as hydrolase in vitro. LovD has much higher activity with LovF-bound 2-methylbutanoate than with free diketide substrates. The polypeptide is Lovastatin diketide synthase lovF (Aspergillus terreus (strain NIH 2624 / FGSC A1156)).